The chain runs to 884 residues: Probable LRR receptor-like serine/threonine-protein kinase PAM74 (884 aa).

The N-terminal stretch at 1 to 23 is a signal peptide; sequence MDSPCWLLLLLLGAFAIIGCVQA. Residues 24 to 510 lie on the Extracellular side of the membrane; it reads QDQQEFISLD…TEKNSKKKFP (487 aa). Residues N143, N182, N200, N256, N289, N400, N403, N417, N433, N444, N465, and N470 are each glycosylated (N-linked (GlcNAc...) asparagine). 3 LRR repeats span residues 412-433, 436-457, and 460-480; these read RVLS…AIQN, HLEK…FLAQ, and SLVI…QGLR. A helical transmembrane segment spans residues 511-531; that stretch reads VVIVASVASVAIIVAVLVIIF. At 532–884 the chain is on the cytoplasmic side; it reads VLSKKKSSTV…FDTELFPRAR (353 aa). At T570 the chain carries Phosphothreonine. Positions 579-852 constitute a Protein kinase domain; the sequence is NNFQRVVGEG…QVANELKECL (274 aa). Residues 585–593 and K607 contribute to the ATP site; that span reads VGEGGFGVV. Y652 is subject to Phosphotyrosine. D704 (proton acceptor) is an active-site residue. Position 738 is a phosphoserine (S738). T739 and T744 each carry phosphothreonine. At Y752 the chain carries Phosphotyrosine.

It belongs to the protein kinase superfamily. Ser/Thr protein kinase family. In terms of assembly, binds to the ammonium transporter AMT1-1.

Its subcellular location is the membrane. It carries out the reaction L-seryl-[protein] + ATP = O-phospho-L-seryl-[protein] + ADP + H(+). The enzyme catalyses L-threonyl-[protein] + ATP = O-phospho-L-threonyl-[protein] + ADP + H(+). Required for accurate photosynthesis. The polypeptide is Probable LRR receptor-like serine/threonine-protein kinase PAM74 (PAM74) (Arabidopsis thaliana (Mouse-ear cress)).